The sequence spans 729 residues: Phosphoribosylformylglycinamidine synthase subunit PurL (729 aa).

His-54 is a catalytic residue. The ATP site is built by Tyr-57 and Lys-96. A Mg(2+)-binding site is contributed by Glu-98. Substrate-binding positions include 99–102 (SHNH) and Arg-121. His-100 serves as the catalytic Proton acceptor. Asp-122 contacts Mg(2+). Gln-245 contributes to the substrate binding site. Asp-273 contacts Mg(2+). 317-319 (ETQ) provides a ligand contact to substrate. Residues Asp-495 and Gly-532 each contribute to the ATP site. Residue Asn-533 coordinates Mg(2+). Position 535 (Ser-535) interacts with substrate.

Belongs to the FGAMS family. Monomer. Part of the FGAM synthase complex composed of 1 PurL, 1 PurQ and 2 PurS subunits.

The protein localises to the cytoplasm. The catalysed reaction is N(2)-formyl-N(1)-(5-phospho-beta-D-ribosyl)glycinamide + L-glutamine + ATP + H2O = 2-formamido-N(1)-(5-O-phospho-beta-D-ribosyl)acetamidine + L-glutamate + ADP + phosphate + H(+). Its pathway is purine metabolism; IMP biosynthesis via de novo pathway; 5-amino-1-(5-phospho-D-ribosyl)imidazole from N(2)-formyl-N(1)-(5-phospho-D-ribosyl)glycinamide: step 1/2. In terms of biological role, part of the phosphoribosylformylglycinamidine synthase complex involved in the purines biosynthetic pathway. Catalyzes the ATP-dependent conversion of formylglycinamide ribonucleotide (FGAR) and glutamine to yield formylglycinamidine ribonucleotide (FGAM) and glutamate. The FGAM synthase complex is composed of three subunits. PurQ produces an ammonia molecule by converting glutamine to glutamate. PurL transfers the ammonia molecule to FGAR to form FGAM in an ATP-dependent manner. PurS interacts with PurQ and PurL and is thought to assist in the transfer of the ammonia molecule from PurQ to PurL. The chain is Phosphoribosylformylglycinamidine synthase subunit PurL from Staphylococcus saprophyticus subsp. saprophyticus (strain ATCC 15305 / DSM 20229 / NCIMB 8711 / NCTC 7292 / S-41).